Here is a 150-residue protein sequence, read N- to C-terminus: Small ribosomal subunit protein eS19 (150 aa).

It belongs to the eukaryotic ribosomal protein eS19 family. Part of the 30S ribosomal subunit.

May be involved in maturation of the 30S ribosomal subunit. This is Small ribosomal subunit protein eS19 from Thermoplasma acidophilum (strain ATCC 25905 / DSM 1728 / JCM 9062 / NBRC 15155 / AMRC-C165).